Consider the following 689-residue polypeptide: Methionine--tRNA ligase (689 aa).

The 'HIGH' region signature appears at 15-25; that stretch reads PYANGPIHLGH. Zn(2+) contacts are provided by Cys146, Cys149, Cys159, and Cys162. The short motif at 332–336 is the 'KMSKS' region element; that stretch reads KMSKS. Lys335 contributes to the ATP binding site. The tRNA-binding domain occupies 588-689; it reads DFAKIDLRIA…EGAQPGMRVK (102 aa).

It belongs to the class-I aminoacyl-tRNA synthetase family. MetG type 1 subfamily. As to quaternary structure, homodimer. Zn(2+) serves as cofactor.

Its subcellular location is the cytoplasm. The catalysed reaction is tRNA(Met) + L-methionine + ATP = L-methionyl-tRNA(Met) + AMP + diphosphate. Functionally, is required not only for elongation of protein synthesis but also for the initiation of all mRNA translation through initiator tRNA(fMet) aminoacylation. This is Methionine--tRNA ligase from Shewanella baltica (strain OS223).